Consider the following 162-residue polypeptide: Interleukin-15 (162 aa).

The first 29 residues, 1–29 (MRISKPHLRSVSIQCYLCLLLNSHFLTEA), serve as a signal peptide directing secretion. A propeptide spanning residues 30–48 (GIHVFILGCFSAGLPKTEA) is cleaved from the precursor. 2 disulfide bridges follow: C83/C133 and C90/C136. N127 carries N-linked (GlcNAc...) asparagine glycosylation.

Belongs to the IL-15/IL-21 family.

The protein resides in the secreted. In terms of biological role, cytokine that plays a major role in the development of inflammatory and protective immune responses to microbial invaders and parasites by modulating immune cells of both the innate and adaptive immune systems. Stimulates the proliferation of natural killer cells, T-cells and B-cells and promotes the secretion of several cytokines. In monocytes, induces the production of IL8 and monocyte chemotactic protein 1/CCL2, two chemokines that attract neutrophils and monocytes respectively to sites of infection. Unlike most cytokines, which are secreted in soluble form, IL15 is expressed in association with its high affinity IL15RA on the surface of IL15-producing cells and delivers signals to target cells that express IL2RB and IL2RG receptor subunits. Binding to its receptor triggers the phosphorylation of JAK1 and JAK3 and the recruitment and subsequent phosphorylation of signal transducer and activator of transcription-3/STAT3 and STAT5. In mast cells, induces the rapid tyrosine phosphorylation of STAT6 and thereby controls mast cell survival and release of cytokines such as IL4. The polypeptide is Interleukin-15 (IL15) (Macaca mulatta (Rhesus macaque)).